Here is a 155-residue protein sequence, read N- to C-terminus: SsrA-binding protein (155 aa).

The protein belongs to the SmpB family.

The protein localises to the cytoplasm. Functionally, required for rescue of stalled ribosomes mediated by trans-translation. Binds to transfer-messenger RNA (tmRNA), required for stable association of tmRNA with ribosomes. tmRNA and SmpB together mimic tRNA shape, replacing the anticodon stem-loop with SmpB. tmRNA is encoded by the ssrA gene; the 2 termini fold to resemble tRNA(Ala) and it encodes a 'tag peptide', a short internal open reading frame. During trans-translation Ala-aminoacylated tmRNA acts like a tRNA, entering the A-site of stalled ribosomes, displacing the stalled mRNA. The ribosome then switches to translate the ORF on the tmRNA; the nascent peptide is terminated with the 'tag peptide' encoded by the tmRNA and targeted for degradation. The ribosome is freed to recommence translation, which seems to be the essential function of trans-translation. The sequence is that of SsrA-binding protein from Streptococcus pneumoniae (strain Hungary19A-6).